Here is a 376-residue protein sequence, read N- to C-terminus: tRNA (guanine(26)-N(2))-dimethyltransferase (376 aa).

The Trm1 methyltransferase domain occupies valine 4–methionine 373. Arginine 36, arginine 61, aspartate 78, aspartate 120, and alanine 121 together coordinate S-adenosyl-L-methionine.

Belongs to the class I-like SAM-binding methyltransferase superfamily. Trm1 family.

The catalysed reaction is guanosine(26) in tRNA + 2 S-adenosyl-L-methionine = N(2)-dimethylguanosine(26) in tRNA + 2 S-adenosyl-L-homocysteine + 2 H(+). In terms of biological role, dimethylates a single guanine residue at position 26 of a number of tRNAs using S-adenosyl-L-methionine as donor of the methyl groups. This chain is tRNA (guanine(26)-N(2))-dimethyltransferase, found in Thermococcus kodakarensis (strain ATCC BAA-918 / JCM 12380 / KOD1) (Pyrococcus kodakaraensis (strain KOD1)).